Consider the following 226-residue polypeptide: Lysoplasmalogenase TMEM86B (226 aa).

Residues 1 to 23 are Cytoplasmic-facing; it reads MDPGKEGLPRKPRFSAQQLHVGK. The chain crosses the membrane as a helical span at residues 24-40; sequence WLSPFFFTCAVYFLLWI. The Extracellular portion of the chain corresponds to 41–46; that stretch reads PDDQPS. A helical transmembrane segment spans residues 47-64; sequence WVGALVKCLPVLSLVVFL. The Cytoplasmic segment spans residues 65-76; that stretch reads RAVDAGGGYSAR. The chain crosses the membrane as a helical span at residues 77-93; the sequence is LQGALLCSAVGDACLVW. Topologically, residues 94–99 are extracellular; that stretch reads PEAFLH. The chain crosses the membrane as a helical span at residues 100-117; the sequence is GVAAFAAAHLLYLWAFGL. The Cytoplasmic portion of the chain corresponds to 118–123; the sequence is TPLQPG. A helical membrane pass occupies residues 124–140; it reads LLLLVILAALPYYGLLL. Topologically, residues 141–146 are extracellular; sequence WHLPPD. Residues 147–163 form a helical membrane-spanning segment; the sequence is LVLALTAYSLALATMLW. At 164 to 171 the chain is on the cytoplasmic side; that stretch reads RGLARGGS. The helical transmembrane segment at 172–188 threads the bilayer; that stretch reads TGWGALLFTLSDTTLAW. Residues 189–199 are Extracellular-facing; the sequence is NAFAQPLPHAR. A helical transmembrane segment spans residues 200-217; it reads LVVMTTYYSAQVLISLSV. The Cytoplasmic portion of the chain corresponds to 218 to 226; the sequence is SQSPKLKPN.

It belongs to the TMEM86 family. In terms of assembly, homodimer.

The protein localises to the endoplasmic reticulum membrane. It is found in the cytoplasm. It carries out the reaction a 1-O-(1Z-alkenyl)-sn-glycero-3-phosphocholine + H2O = a 2,3-saturated aldehyde + sn-glycerol 3-phosphocholine. It catalyses the reaction a 1-O-(1Z-alkenyl)-sn-glycero-3-phosphoethanolamine + H2O = a 2,3-saturated aldehyde + sn-glycero-3-phosphoethanolamine. Its activity is regulated as follows. Competitively inhibited by lysophosphatidic acid. In terms of biological role, catalyzes the hydrolysis of the vinyl ether bond of choline or ethanolamine lysoplasmalogens, forming fatty aldehyde and glycerophosphocholine or glycerophosphoethanolamine, respectively and is specific for the sn-2-deacylated (lyso) form of plasmalogen. The polypeptide is Lysoplasmalogenase TMEM86B (TMEM86B) (Sus scrofa (Pig)).